The following is an 829-amino-acid chain: Transmembrane protease serine 7 (829 aa).

Over 1-62 (MDKEKSDPSC…RAPFWNVQNK (62 aa)) the chain is Cytoplasmic. Residues 26–52 (SVPGKLPGRRPPRKPIGKPRPRKQPKK) are disordered. Over residues 32–52 (PGRRPPRKPIGKPRPRKQPKK) the composition is skewed to basic residues. Residues 63-83 (IILFTVFLFILAVTAWTLLWL) form a helical; Signal-anchor for type II membrane protein membrane-spanning segment. At 84–829 (YISKTESKDA…WIHKYVPSLL (746 aa)) the chain is on the extracellular side. One can recognise an SEA domain in the interval 92–220 (DAFYFVGMFR…DSVVLNAGLR (129 aa)). 3 cysteine pairs are disulfide-bonded: C233-C259, C285-C308, and C351-C382. CUB domains are found at residues 233–346 (CSRY…FEVI) and 351–467 (CEST…YNIS). N-linked (GlcNAc...) asparagine glycans are attached at residues N401 and N465. 3 consecutive LDL-receptor class A domains span residues 469–505 (PCPA…LFCV), 503–540 (FCVT…QNCT), and 544–581 (PCTS…EGCG). Disulfide bonds link C470–C482, C477–C495, C489–C504, C511–C530, C524–C539, C545–C557, C552–C571, C565–C580, and C617–C633. In terms of domain architecture, Peptidase S1 spans 592 to 826 (IVGGSDSQEG…FVPWIHKYVP (235 aa)). Residues H632 and D680 each act as charge relay system in the active site. Cystine bridges form between C716–C782, C748–C761, and C772–C802. S776 serves as the catalytic Charge relay system.

It belongs to the peptidase S1 family. In terms of assembly, forms a heterodimer with SERPINA5. Post-translationally, N-glycosylated. In terms of tissue distribution, expressed in brain, eye, testis, skin, epididymis and salivary gland with lower levels in heart, skeletal muscle, thymus, ovary, prostate and uterus.

It is found in the cell membrane. Functionally, serine protease which preferentially hydrolyzes peptides with Arg at the P1 position. The protein is Transmembrane protease serine 7 (Tmprss7) of Mus musculus (Mouse).